A 426-amino-acid chain; its full sequence is Histidine--tRNA ligase (426 aa).

It belongs to the class-II aminoacyl-tRNA synthetase family. In terms of assembly, homodimer.

Its subcellular location is the cytoplasm. It catalyses the reaction tRNA(His) + L-histidine + ATP = L-histidyl-tRNA(His) + AMP + diphosphate + H(+). In Streptococcus agalactiae serotype Ia (strain ATCC 27591 / A909 / CDC SS700), this protein is Histidine--tRNA ligase.